Reading from the N-terminus, the 1507-residue chain is Chromatin-remodeling ATPase INO80 (1507 aa).

Disordered regions lie at residues 30-82 (PEDE…DAED) and 428-452 (RKKQEKEAAEAFKREQEQRESKRQQ). Over residues 38–67 (GSSSQDESRSTQGGVVANYSNGSKSRMNAS) the composition is skewed to polar residues. The DBINO domain maps to 350–475 (AWINIVRRDI…SHFMQNKTDS (126 aa)). The span at 428-450 (RKKQEKEAAEAFKREQEQRESKR) shows a compositional bias: basic and acidic residues. The region spanning 598 to 769 (VNCYEQGLNG…WALLHFIMPM (172 aa)) is the Helicase ATP-binding domain. 611–618 (DEMGLGKT) lines the ATP pocket. Residues 1210–1360 (TLDILLKRLR…QLVMTGGHVQ (151 aa)) enclose the Helicase C-terminal domain. Residues 1415 to 1507 (LEELEDVDRQ…KGFDPSSSAN (93 aa)) form a disordered region. A compositionally biased stretch (polar residues) spans 1491–1507 (ASVTESNKGFDPSSSAN).

This sequence belongs to the SNF2/RAD54 helicase family. As to quaternary structure, component of the INO80 chromatin-remodeling complex. Associates with REF6/EIN6.

Its subcellular location is the nucleus. It catalyses the reaction ATP + H2O = ADP + phosphate + H(+). Its function is as follows. ATPase component of the chromatin remodeling INO80 complex which is involved in transcriptional regulation, DNA replication and DNA repair. Binds DNA. As part of the INO80 complex, remodels chromatin by shifting nucleosomes. The INO80 complex controls ethylene-induced H2A.Z eviction dynamics. Positive regulator of homologous recombination, but not an essential component of homologous recombination. Not involved in the illegitimate repair pathway. In Arabidopsis thaliana (Mouse-ear cress), this protein is Chromatin-remodeling ATPase INO80.